The primary structure comprises 1011 residues: Phosphoenolpyruvate carboxylase (1011 aa).

Active-site residues include His207 and Lys658.

The protein belongs to the PEPCase type 1 family. Mg(2+) serves as cofactor.

It catalyses the reaction oxaloacetate + phosphate = phosphoenolpyruvate + hydrogencarbonate. Its function is as follows. Forms oxaloacetate, a four-carbon dicarboxylic acid source for the tricarboxylic acid cycle. The protein is Phosphoenolpyruvate carboxylase (ppc) of Thermosynechococcus vestitus (strain NIES-2133 / IAM M-273 / BP-1).